A 595-amino-acid chain; its full sequence is MFS-type efflux pump MFS2 (595 aa).

The N-linked (GlcNAc...) asparagine glycan is linked to Asn62. 12 consecutive transmembrane segments (helical) span residues 69 to 89, 106 to 126, 136 to 156, 166 to 186, 197 to 217, 225 to 245, 301 to 321, 336 to 356, 381 to 401, 409 to 429, 442 to 462, and 478 to 498; these read WSIT…SSAY, VITL…LIWA, LLFF…AGSP, FFAG…IADM, GIFA…GGFL, WVEG…SIFL, PIVL…YMLF, PGIG…AMVI, LPVA…FAWT, IVSI…FLSL, ASVL…FPLF, and IPAF…IYGA.

This sequence belongs to the major facilitator superfamily. DHA1 family. Polyamines/proton antiporter (TC 2.A.1.2.16) subfamily.

The protein resides in the cell membrane. In terms of biological role, MFS-type efflux pump involved in the modulation susceptibility to fluconazole and voriconazole, 2 azoles with similar molecular structure. In Trichophyton rubrum (strain ATCC MYA-4607 / CBS 118892) (Athlete's foot fungus), this protein is MFS-type efflux pump MFS2.